The primary structure comprises 1038 residues: Subtilisin-like protease SBT6.1 (1038 aa).

Positions 1–30 (MKVLGEASSYPYRSCIIVVFLSVSLFWLRP) are cleaved as a signal peptide. A propeptide spans 31–181 (STYHPQQQNL…TTLNWSRHLL (151 aa)) (removed in mature form). N-linked (GlcNAc...) asparagine glycans are attached at residues Asn44, Asn52, Asn171, and Asn175. The Peptidase S8 domain occupies 175 to 473 (NWSRHLLAQK…VDLLESYEIL (299 aa)). Over 182–1000 (AQKTQVTSMF…IDMPFLVPTR (819 aa)) the chain is Lumenal. Asp212 (charge relay system) is an active-site residue. N-linked (GlcNAc...) asparagine glycosylation occurs at Asn230. His243 functions as the Charge relay system in the catalytic mechanism. Asn300 carries an N-linked (GlcNAc...) asparagine glycan. The Charge relay system role is filled by Ser409. N-linked (GlcNAc...) asparagine glycosylation is found at Asn513, Asn579, Asn902, and Asn954. Residues 1001 to 1021 (WIVLAGVVASGVLVLLSIWRI) traverse the membrane as a helical segment. Residues 1022–1038 (RQKRGRRRRASGSNRLA) lie on the Cytoplasmic side of the membrane.

It belongs to the peptidase S8 family. As to quaternary structure, interacts with PME1 and PME5. Expressed in the vasculature of roots, cotyledons and leaves.

It is found in the golgi apparatus membrane. Functionally, serine protease that catalyzes the first step (site-1 cleavage) in the proteolytic activation of various factors, prior to site-2 cleavage. Part of a regulated intramembrane proteolysis (RIP) cascade. Cleaves BZIP17 and BZIP28 after the Arg-Arg-Ile-Leu (RRIL) motif. May cleave BZIP49 after the RRIL motif. Targets the membrane-associated BZIP17 factor, which functions as a stress sensor and transducer in a signaling pathway that resembles an ER stress response. Following salt stress, BZIP17 is cleaved by SBT6.1 (S1P) and S2P at the C-terminus and the N-terminal bZIP component is translocated to the nucleus, where it activates the expression of salt stress response genes. Cleaves the pectinesterases PME1 after the Arg-Arg-Leu-Met (RRLM) and Arg-Arg-Leu-Leu (RRLL) motifs, and PME5 after the Arg-Arg-Leu-Leu (RRLL) and Arg-Lys-Leu-Met (RKLM) motifs. This processing and C-terminus release occurs in the Golgi apparatus and is required for cell wall targeting of pectinesterases. Thus, SBT6.1 mediates the regulated release of mature pectinesterases from the Golgi. Cleaves the peptide growth factor RALF23 after the Arg-Arg-Ile-Leu (RRIL) motif. This processing is required for RALF23 function in the negative regulation of brassinolide (BL)-mediated signaling pathway (e.g. BL-induced hypocotyl elongation and branching limitation). This is Subtilisin-like protease SBT6.1 from Arabidopsis thaliana (Mouse-ear cress).